The sequence spans 163 residues: I-Kappa-B like protein N3 (163 aa).

ANK repeat units lie at residues 62–95 (LGDT…NLNT) and 100–130 (NGDT…NLQT).

This sequence belongs to the polydnaviridae I-Kappa-B like protein family.

Suppresses the host immune response through NF-kappa-B inactivation. Possesses ankyrin repeat domains required for NF-kappa-B binding but lacks the regulatory regions required for dissociation from NF-kappa-B and degradation. Therefore, prevents host NF-kappa-B release and subsequent activation. This Microplitis demolitor (Parasitoid wasp) protein is I-Kappa-B like protein N3 (N6).